We begin with the raw amino-acid sequence, 529 residues long: Extracellular signal-regulated kinase 1 (529 aa).

2 disordered regions span residues 1–20 and 100–131; these read MEPEFDHFQSQMDSDNTHQS and QQNQQQQSQQMTQQQLQQLMPPPPTSDTSNFN. Over residues 8–20 the composition is skewed to polar residues; it reads FQSQMDSDNTHQS. Over residues 100–117 the composition is skewed to low complexity; it reads QQNQQQQSQQMTQQQLQQ. The Protein kinase domain occupies 149–439; the sequence is YSIVKCIGHG…EALAHPYFQS (291 aa). Residues 155-163 and Lys178 contribute to the ATP site; that span reads IGHGAYGVV. Asp275 (proton acceptor) is an active-site residue. Thr309 carries the phosphothreonine modification. A TXY motif is present at residues 309 to 311; the sequence is TEY. Residue Tyr311 is modified to Phosphotyrosine.

This sequence belongs to the protein kinase superfamily. CMGC Ser/Thr protein kinase family. MAP kinase subfamily. Requires Mg(2+) as cofactor. Post-translationally, dually phosphorylated on Thr-309 and Tyr-311, which activates the enzyme.

The catalysed reaction is L-seryl-[protein] + ATP = O-phospho-L-seryl-[protein] + ADP + H(+). It catalyses the reaction L-threonyl-[protein] + ATP = O-phospho-L-threonyl-[protein] + ADP + H(+). Its activity is regulated as follows. Activated by tyrosine and threonine phosphorylation. In terms of biological role, kinase involved in a signal transduction pathway. This chain is Extracellular signal-regulated kinase 1 (erkA), found in Dictyostelium discoideum (Social amoeba).